Consider the following 256-residue polypeptide: Acetylglutamate kinase (256 aa).

Substrate-binding positions include 40-41 (GG), arginine 62, and asparagine 154.

Belongs to the acetylglutamate kinase family. ArgB subfamily.

Its subcellular location is the cytoplasm. It catalyses the reaction N-acetyl-L-glutamate + ATP = N-acetyl-L-glutamyl 5-phosphate + ADP. It functions in the pathway amino-acid biosynthesis; L-arginine biosynthesis; N(2)-acetyl-L-ornithine from L-glutamate: step 2/4. Catalyzes the ATP-dependent phosphorylation of N-acetyl-L-glutamate. In Staphylococcus aureus (strain bovine RF122 / ET3-1), this protein is Acetylglutamate kinase.